Consider the following 221-residue polypeptide: Ribosomal RNA large subunit methyltransferase E (221 aa).

5 residues coordinate S-adenosyl-L-methionine: Gly60, Trp62, Asp89, Asp105, and Asp134. The active-site Proton acceptor is Lys174.

This sequence belongs to the class I-like SAM-binding methyltransferase superfamily. RNA methyltransferase RlmE family.

It localises to the cytoplasm. It catalyses the reaction uridine(2552) in 23S rRNA + S-adenosyl-L-methionine = 2'-O-methyluridine(2552) in 23S rRNA + S-adenosyl-L-homocysteine + H(+). In terms of biological role, specifically methylates the uridine in position 2552 of 23S rRNA at the 2'-O position of the ribose in the fully assembled 50S ribosomal subunit. The protein is Ribosomal RNA large subunit methyltransferase E of Cupriavidus metallidurans (strain ATCC 43123 / DSM 2839 / NBRC 102507 / CH34) (Ralstonia metallidurans).